Reading from the N-terminus, the 349-residue chain is 3-dehydroquinate synthase (349 aa).

Residues Asp-63–Lys-68, Gly-97–Asp-101, Thr-121–Thr-122, Lys-134, Lys-143, and Phe-161–Thr-164 each bind NAD(+). Zn(2+) is bound by residues Glu-176, His-235, and His-252.

The protein belongs to the sugar phosphate cyclases superfamily. Dehydroquinate synthase family. Requires Co(2+) as cofactor. Zn(2+) serves as cofactor. It depends on NAD(+) as a cofactor.

The protein resides in the cytoplasm. The enzyme catalyses 7-phospho-2-dehydro-3-deoxy-D-arabino-heptonate = 3-dehydroquinate + phosphate. Its pathway is metabolic intermediate biosynthesis; chorismate biosynthesis; chorismate from D-erythrose 4-phosphate and phosphoenolpyruvate: step 2/7. In terms of biological role, catalyzes the conversion of 3-deoxy-D-arabino-heptulosonate 7-phosphate (DAHP) to dehydroquinate (DHQ). The protein is 3-dehydroquinate synthase of Nitratiruptor sp. (strain SB155-2).